We begin with the raw amino-acid sequence, 934 residues long: Oxysterol-binding protein-related protein 6 (934 aa).

Positions 1-62 (MSSDEKGISP…RQLLEPEPVP (62 aa)) are disordered. Residue serine 2 is modified to N-acetylserine. The span at 14–29 (TSTPTHRSASSSTSSQ) shows a compositional bias: low complexity. Residues 30–40 (RDSRQSIHILE) are compositionally biased toward basic and acidic residues. Serine 35 carries the post-translational modification Phosphoserine. Residues 42–53 (TASSSTEPSVSR) are compositionally biased toward polar residues. The region spanning 86–181 (PDKHEGFMLK…WVSKLRHHRL (96 aa)) is the PH domain. 2 positions are modified to phosphoserine: serine 190 and serine 290.

The protein belongs to the OSBP family. Homodimer. Interacts with OSBPL3. In terms of tissue distribution, expressed in brain and striated muscle (at protein level). Widely expressed. Expressed in skeletal muscle.

It localises to the cytoplasm. The protein resides in the cytosol. Its subcellular location is the endoplasmic reticulum membrane. The protein localises to the nucleus envelope. It is found in the cell membrane. It localises to the endosome membrane. Its function is as follows. Regulates cellular transport and efflux of cholesterol. Plays a role in phosphatidylinositol-4-phophate (PI4P) turnover at the neuronal membrane. Binds via its PH domain PI4P, phosphatidylinositol-4,5-diphosphate, phosphatidylinositol-3,4,5-triphosphate, and phosphatidic acid. Weakly binds 25-hydroxycholesterol. The sequence is that of Oxysterol-binding protein-related protein 6 (OSBPL6) from Homo sapiens (Human).